Here is an 888-residue protein sequence, read N- to C-terminus: MASNIFSRIKSPSGGSQSFYQQLRSGEDPEYDPGLDEENLGHRFDDFQAEGMDIGDSSMTVESVAPGSKGKGKATFRPTAHARSSGITSPRWQQDDDGDNEVPASLLMEPKDLDPPASPPNKRATNPGSSRTPASVGPSSARTRAQWEAATAQQQLHQDHPYTTPMGPQPIPVARGTMSNNPREKALWRWVNTSNLDSFMRDVYDYFEGGGLWCILCANALWLFQCIDYSRVPDSRSLHEVIVPQCTRKMSGLWNFAIWLYTFFFIWKCVQYFVEIRRLTYIRDFYIYLLDIPEQDMQTISWQDVVARIMALREENPKTATNISPRLRQFMGSQSKERLDALDIANRLMRKENYLIAMINKDILDLSLPVPFLRGRQMFSKTMEWYLQYCILDMAFNELGQVQQDFLRPDRRRLLSQKLRQRFLFAGFLNLLFAPVVLAYVVIVYFFTYYYEYQKDPKQAAARKYTSLAEWKFRQFNELPHIFYERLHMSYPFATRYIDQFPKRITEAVARTIAFMSGAITAILAIGSVLDSELFLNFEITKDRPVIFYLGVFAAIWATTRGMVSEETLVFNPEYALRNVIEYTRYVPDHWKNKLHSSEVKQEFSELYKMKVVIFLEEMMGIVTTPMLLLFSLPRCSDQIVDFFREFTIHVDGLGYVCSFAVFDFQKGPGNTGPQGPRPDVREDYYSTKHGKMAASYYGFLDNYAANPKTGIPGHLPPGPKPSFHPPPSFPGIGSPTLAADMQGSHIGRTGTETGRARSRAPGGRGPRIGVMPQPSPMASMLLDQHHQPPGGNMVARSLHASRYPRGYRGESQIIEETEASSIRRNGEDDELYEPGGALGESVWETSPARGVTRENSAANTEDPEAGVLGLIYQLQQTQRPRRGGGMV.

Residues 1 to 170 form a disordered region; that stretch reads MASNIFSRIK…PYTTPMGPQP (170 aa). Topologically, residues 1–255 are cytoplasmic; it reads MASNIFSRIK…CTRKMSGLWN (255 aa). Polar residues predominate over residues 13-24; the sequence is SGGSQSFYQQLR. Positions 28 to 38 are enriched in acidic residues; the sequence is DPEYDPGLDEE. Over residues 123-143 the composition is skewed to polar residues; that stretch reads RATNPGSSRTPASVGPSSART. The helical transmembrane segment at 256–276 threads the bilayer; sequence FAIWLYTFFFIWKCVQYFVEI. Topologically, residues 277–422 are lumenal; it reads RRLTYIRDFY…RLLSQKLRQR (146 aa). A helical membrane pass occupies residues 423-443; that stretch reads FLFAGFLNLLFAPVVLAYVVI. The Cytoplasmic portion of the chain corresponds to 444–511; that stretch reads VYFFTYYYEY…PKRITEAVAR (68 aa). The stretch at 512 to 532 is an intramembrane region; sequence TIAFMSGAITAILAIGSVLDS. Residues 533–544 lie on the Cytoplasmic side of the membrane; that stretch reads ELFLNFEITKDR. A helical membrane pass occupies residues 545-565; it reads PVIFYLGVFAAIWATTRGMVS. The Lumenal portion of the chain corresponds to 566–611; it reads EETLVFNPEYALRNVIEYTRYVPDHWKNKLHSSEVKQEFSELYKMK. Residues 612–632 form a helical membrane-spanning segment; the sequence is VVIFLEEMMGIVTTPMLLLFS. At 633 to 642 the chain is on the cytoplasmic side; it reads LPRCSDQIVD. An intramembrane segment occupies 643–663; the sequence is FFREFTIHVDGLGYVCSFAVF. Residues 664–888 are Cytoplasmic-facing; the sequence is DFQKGPGNTG…QRPRRGGGMV (225 aa). 2 disordered regions span residues 748-770 and 834-866; these read GRTG…PRIG and EPGG…DPEA.

It belongs to the ATG9 family. Homotrimer; forms a homotrimer with a central pore that forms a path between the two membrane leaflets. In terms of processing, phosphorylated by ATG1. ATG1 phosphorylation is required for ATG18 interaction and preautophagosome elongation.

The protein localises to the preautophagosomal structure membrane. The protein resides in the cytoplasmic vesicle membrane. It localises to the golgi apparatus membrane. Its subcellular location is the endoplasmic reticulum membrane. The catalysed reaction is a 1,2-diacyl-sn-glycero-3-phosphocholine(in) = a 1,2-diacyl-sn-glycero-3-phosphocholine(out). The enzyme catalyses a 1,2-diacyl-sn-glycero-3-phospho-L-serine(in) = a 1,2-diacyl-sn-glycero-3-phospho-L-serine(out). It carries out the reaction a 1,2-diacyl-sn-glycero-3-phosphoethanolamine(in) = a 1,2-diacyl-sn-glycero-3-phosphoethanolamine(out). It catalyses the reaction a 1,2-diacyl-sn-glycero-3-phospho-(1D-myo-inositol-3-phosphate)(in) = a 1,2-diacyl-sn-glycero-3-phospho-(1D-myo-inositol-3-phosphate)(out). Its function is as follows. Phospholipid scramblase involved in autophagy and cytoplasm to vacuole transport (Cvt) vesicle formation. Cycles between the preautophagosomal structure/phagophore assembly site (PAS) and the cytoplasmic vesicle pool and supplies membrane for the growing autophagosome. Lipid scramblase activity plays a key role in preautophagosomal structure/phagophore assembly by distributing the phospholipids that arrive through ATG2 from the cytoplasmic to the luminal leaflet of the bilayer, thereby driving autophagosomal membrane expansion. Required for mitophagy. Also involved in endoplasmic reticulum-specific autophagic process and is essential for the survival of cells subjected to severe ER stress. Different machineries are required for anterograde trafficking to the PAS during either the Cvt pathway or bulk autophagy and for retrograde trafficking. Autophagy is required for proper vegetative growth, asexual/sexual reproduction, and full virulence. Autophagy is particularly involved in the biosynthesis of deoxynivalenol (DON), an important virulence determinant. Required for aerial hyphae development and lipid droplet degradation in response to starvation. This Gibberella zeae (strain ATCC MYA-4620 / CBS 123657 / FGSC 9075 / NRRL 31084 / PH-1) (Wheat head blight fungus) protein is Autophagy-related protein 9.